A 151-amino-acid polypeptide reads, in one-letter code: Large ribosomal subunit protein uL15 (151 aa).

Residues 1 to 45 (MNLSSLKPVKGSTKTCKRVGRGQGSGCGGTSTRGHKGQKSRSGYS) are disordered. Gly residues predominate over residues 21 to 31 (RGQGSGCGGTS).

Belongs to the universal ribosomal protein uL15 family. As to quaternary structure, part of the 50S ribosomal subunit.

Binds to the 23S rRNA. The protein is Large ribosomal subunit protein uL15 of Azobacteroides pseudotrichonymphae genomovar. CFP2.